The sequence spans 227 residues: NAD(P)H-quinone oxidoreductase subunit K, chloroplastic (227 aa).

Residues Cys-43, Cys-44, Cys-108, and Cys-139 each coordinate [4Fe-4S] cluster.

The protein belongs to the complex I 20 kDa subunit family. As to quaternary structure, NDH is composed of at least 16 different subunits, 5 of which are encoded in the nucleus. [4Fe-4S] cluster is required as a cofactor.

The protein localises to the plastid. Its subcellular location is the chloroplast thylakoid membrane. It catalyses the reaction a plastoquinone + NADH + (n+1) H(+)(in) = a plastoquinol + NAD(+) + n H(+)(out). The catalysed reaction is a plastoquinone + NADPH + (n+1) H(+)(in) = a plastoquinol + NADP(+) + n H(+)(out). NDH shuttles electrons from NAD(P)H:plastoquinone, via FMN and iron-sulfur (Fe-S) centers, to quinones in the photosynthetic chain and possibly in a chloroplast respiratory chain. The immediate electron acceptor for the enzyme in this species is believed to be plastoquinone. Couples the redox reaction to proton translocation, and thus conserves the redox energy in a proton gradient. This chain is NAD(P)H-quinone oxidoreductase subunit K, chloroplastic, found in Citrus sinensis (Sweet orange).